The chain runs to 175 residues: Respiratory supercomplex factor 1-B, mitochondrial (175 aa).

Residues 3 to 94 enclose the HIG1 domain; sequence DQADVLADPD…TERKQRREFE (92 aa). 2 consecutive transmembrane segments (helical) span residues 30 to 46 and 66 to 83; these read PLIP…LYRA and IYAQ…GMYY. The stretch at 83–115 forms a coiled coil; sequence YKTERKQRREFEKKVEERKAQEKRDAWLRELEA.

This sequence belongs to the RCF1 family. In terms of assembly, associates with the respiratory chain complex III/complex IV supercomplex.

It localises to the mitochondrion membrane. Cytochrome c oxidase subunit which plays a role in assembly of respiratory supercomplexes. In Talaromyces marneffei (strain ATCC 18224 / CBS 334.59 / QM 7333) (Penicillium marneffei), this protein is Respiratory supercomplex factor 1-B, mitochondrial (rcf1-B).